The sequence spans 360 residues: Peptide chain release factor 1 (360 aa).

Q235 bears the N5-methylglutamine mark. A compositionally biased stretch (basic and acidic residues) spans 284–293; the sequence is ARRQQEESST. The segment at 284 to 314 is disordered; the sequence is ARRQQEESSTRRNLLGSGDRSDRNRTYNFPQ.

This sequence belongs to the prokaryotic/mitochondrial release factor family. Post-translationally, methylated by PrmC. Methylation increases the termination efficiency of RF1.

The protein resides in the cytoplasm. In terms of biological role, peptide chain release factor 1 directs the termination of translation in response to the peptide chain termination codons UAG and UAA. In Erwinia tasmaniensis (strain DSM 17950 / CFBP 7177 / CIP 109463 / NCPPB 4357 / Et1/99), this protein is Peptide chain release factor 1.